The sequence spans 358 residues: MEGSSSTIARKTWELENSILTVDSPDSTSDNIFYYDDTSQTRFQQEKPWENDPHYFKRVKISALALLKMVVHARSGGTIEIMGLMQGKTDGDTIIVMDAFALPVEGTETRVNAQDDAYEYMVEYSQTNKLAGRLENVVGWYHSHPGYGCWLSGIDVSTQRLNQQHQEPFLAVVIDPTRTVSAGKVEIGAFRTYSKGYKPPDEPVSEYQTIPLNKIEDFGVHCKQYYSLDVTYFKSSLDSHLLDLLWNKYWVNTLSSSPLLGNGDYVAGQISDLAEKLEQAESHLVQSRFGGVVPSSLHKKKEDESQLTKITRDSAKITVEQVHGLMSQVIKDELFNSMRQSNNKSPTDSSDPDPMITY.

Residue M1 is modified to N-acetylmethionine. Positions 59–196 (VKISALALLK…IGAFRTYSKG (138 aa)) constitute an MPN domain. 3 residues coordinate Zn(2+): H142, H144, and D155. The short motif at 142–155 (HSHPGYGCWLSGID) is the JAMM motif element. Residues 338–349 (MRQSNNKSPTDS) show a composition bias toward polar residues. Residues 338–358 (MRQSNNKSPTDSSDPDPMITY) are disordered.

Belongs to the peptidase M67A family. CSN5 subfamily. Component of the CSN complex, probably composed of CSN1, CSN2, CSN3, CSN4, CSN5 (CSN5A or CSN5B), CSN6 (CSN6A or CSN6B), CSN7 and CSN8. CSN5A or CSN5B are present within distinct CSN complexes each containing only one copy of CSN5. Interacts with itself. In the complex, it is located in the center and probably interacts directly with CSN4 and CSN6A or CSN6B. Also exists as monomeric form. Interacts with CYT1 in vitro and in planta. Interacts with FLZ3. The cofactor is a divalent metal cation. As to expression, ubiquitously expressed. Highly expressed in flowers and roots. Expressed at lower level in seedlings and siliques.

The protein resides in the cytoplasm. It localises to the nucleus. In terms of biological role, probable protease subunit of the COP9 signalosome complex (CSN), a complex involved in various cellular and developmental processes such as photomorphogenesis and auxin and jasmonate responses. The CSN complex is an essential regulator of the ubiquitin (Ubl) conjugation pathway by mediating the deneddylation of the cullin subunits of the SCF-type E3 ligase complexes, leading to decrease the Ubl ligase activity of SCF. In the complex, it probably acts as the catalytic center that mediates the cleavage of Nedd8 from cullins. It however has no metalloprotease activity by itself and requires the other subunits of the CSN complex. The CSN complex is involved in repression of photomorphogenesis in darkness by regulating the activity of COP1-containing Ubl ligase complexes. The complex is also required for degradation of PSIAA6 by regulating the activity of the Ubl ligase SCF-TIR complex. Not involved in CSN's deneddylation/derubylation activity. Essential for the structural integrity of the CSN holocomplex. The protein is COP9 signalosome complex subunit 5b of Arabidopsis thaliana (Mouse-ear cress).